The sequence spans 409 residues: Glutamyl-tRNA reductase (409 aa).

Residues 48 to 51 (TCNR), Ser89, 94 to 96 (ENE), and Gln100 each bind substrate. Cys49 functions as the Nucleophile in the catalytic mechanism. 165–170 (GNGMLA) contributes to the NADP(+) binding site.

This sequence belongs to the glutamyl-tRNA reductase family. As to quaternary structure, homodimer.

The catalysed reaction is (S)-4-amino-5-oxopentanoate + tRNA(Glu) + NADP(+) = L-glutamyl-tRNA(Glu) + NADPH + H(+). Its pathway is porphyrin-containing compound metabolism; protoporphyrin-IX biosynthesis; 5-aminolevulinate from L-glutamyl-tRNA(Glu): step 1/2. Functionally, catalyzes the NADPH-dependent reduction of glutamyl-tRNA(Glu) to glutamate 1-semialdehyde (GSA). The polypeptide is Glutamyl-tRNA reductase (Thermoplasma volcanium (strain ATCC 51530 / DSM 4299 / JCM 9571 / NBRC 15438 / GSS1)).